We begin with the raw amino-acid sequence, 289 residues long: MITYLFPGQGSQKQGMGSSLFDEFKDLTEQADETLGYSMKRLCLENPYSNLHKTQFTQPALYVVNVLSYLKKIQDNDIKPDYVAGHSLGEYNALFAAGAFDFITGLQLVRKRGELMSMATDGKMAAVMGLTAAQVSDALQTHGLHTIDIANMNSPHQVVISGRKEDIERAKSVFEGLKDVTMFHPLNVSGAFHSRYMSEAKQEFEKFLQSFHFSAISIPVISNVHARPYEQDGIHSVLADQIDHSVRWNDSIRYLLDKGRMEFEEVGPGHVLTGLIHRIKNETEASPAM.

Catalysis depends on residues serine 87 and histidine 193.

This sequence belongs to the FabD family.

The protein resides in the cytoplasm. It catalyses the reaction holo-[ACP] + malonyl-CoA = malonyl-[ACP] + CoA. It participates in antibiotic biosynthesis; bacillaene biosynthesis. In terms of biological role, involved in some intermediate steps for the synthesis of the antibiotic polyketide bacillaene which is involved in secondary metabolism. It catalyzes the transfer of the malonyl-CoA group to the acyl-carrier-protein AcpK (Mal-AcpK). In Bacillus velezensis (strain DSM 23117 / BGSC 10A6 / LMG 26770 / FZB42) (Bacillus amyloliquefaciens subsp. plantarum), this protein is Polyketide biosynthesis malonyl CoA-acyl carrier protein transacylase BaeC (baeC).